We begin with the raw amino-acid sequence, 495 residues long: DUF21 domain-containing protein At4g14230 (495 aa).

Over 1–42 (MHPINAVVAARMLAGISQSNALQSEAIPFGSLEWITYAGISC) the chain is Extracellular. The 183-residue stretch at 30–212 (GSLEWITYAG…GKGGELTHDE (183 aa)) folds into the CNNM transmembrane domain. A helical transmembrane segment spans residues 43-63 (FLVLFAGIMSGLTLGLMSLGL). The Cytoplasmic portion of the chain corresponds to 64–92 (VELEILQRSGTPKEKKQSAAIFPVVQKQH). A helical membrane pass occupies residues 93 to 113 (QLLVTLLLFNALAMEGLPIYL). At 114 to 120 (DKIFNEY) the chain is on the extracellular side. The chain crosses the membrane as a helical span at residues 121–141 (VAIILSVTFVLFVGEVIPQAI). The Cytoplasmic portion of the chain corresponds to 142 to 146 (CTRYG). Residues 147 to 167 (LAVGANLVWLVRILMVLSYPI) traverse the membrane as a helical segment. The Extracellular segment spans residues 168 to 495 (SFPIAKMLDW…TMTGPPQGNN (328 aa)). 3 consecutive CBS domains span residues 231-291 (MTPI…TGTL), 296-356 (GIRR…NNSE), and 357-426 (LTAP…IVDE). Residues 330–354 (KGKSKGHPSTLHEENSGESNVSSNN) are disordered. N-linked (GlcNAc...) asparagine glycosylation occurs at N349. S352 carries the post-translational modification Phosphoserine. Residue N353 is glycosylated (N-linked (GlcNAc...) asparagine). A disordered region spans residues 455-495 (SGRRLLGPKGSGGPKTPKASSTPKPDDKLMGTMTGPPQGNN). Residues 456 to 477 (GRRLLGPKGSGGPKTPKASSTP) are compositionally biased toward low complexity.

It is found in the membrane. The sequence is that of DUF21 domain-containing protein At4g14230 (CBSDUF2) from Arabidopsis thaliana (Mouse-ear cress).